Here is a 336-residue protein sequence, read N- to C-terminus: Foldase protein PrsA (336 aa).

The first 22 residues, 1–22 (MKSAKKLLSVLCLGIFILTFTA), serve as a signal peptide directing secretion. Cys23 carries the N-palmitoyl cysteine lipid modification. Cys23 carries S-diacylglycerol cysteine lipidation. One can recognise a PpiC domain in the interval 194 to 286 (PNTMNVSHIL…FGYHIIKINS (93 aa)).

It belongs to the PrsA family.

Its subcellular location is the cell membrane. It carries out the reaction [protein]-peptidylproline (omega=180) = [protein]-peptidylproline (omega=0). Functionally, plays a major role in protein secretion by helping the post-translocational extracellular folding of several secreted proteins. This Clostridium botulinum (strain Okra / Type B1) protein is Foldase protein PrsA.